The sequence spans 364 residues: Methylthioribose-1-phosphate isomerase (364 aa).

The active-site Proton donor is Asp-254.

Belongs to the eIF-2B alpha/beta/delta subunits family. MtnA subfamily.

The protein localises to the cytoplasm. Its subcellular location is the nucleus. It carries out the reaction 5-(methylsulfanyl)-alpha-D-ribose 1-phosphate = 5-(methylsulfanyl)-D-ribulose 1-phosphate. Its pathway is amino-acid biosynthesis; L-methionine biosynthesis via salvage pathway; L-methionine from S-methyl-5-thio-alpha-D-ribose 1-phosphate: step 1/6. Its function is as follows. Catalyzes the interconversion of methylthioribose-1-phosphate (MTR-1-P) into methylthioribulose-1-phosphate (MTRu-1-P). The chain is Methylthioribose-1-phosphate isomerase from Drosophila sechellia (Fruit fly).